The following is a 360-amino-acid chain: Hydroxyproline O-arabinosyltransferase RDN2 (360 aa).

A helical; Signal-anchor transmembrane segment spans residues 13–33 (VLGSSFATYNLVTMIIHYGSA).

Its subcellular location is the golgi apparatus membrane. The enzyme catalyses trans-4-hydroxy-L-prolyl-[protein] + UDP-beta-L-arabinofuranose = O-(beta-L-arabinofuranosyl)-trans-4-hydroxy-L-prolyl-[protein] + UDP + H(+). Glycosyltransferase involved in the O-arabinosylation of several proteins including extensins and small signaling peptides. Catalyzes the transfer of the initial L-arabinose to the hydroxyl group of Hyp residues. Probably involved in the arabinosylation of CLAVATA3/ESR-related (CLE) signaling peptides that move from root to shoot, to interact with SUNN receptor kinase signaling that regulates nodulation. Involved in long distance nodulation signaling events. Involved in the autoregulation of nodulation (AON), a long distance systemic signaling from root to shoot and back again, which allows legumes to limit the number of root nodules formed based on available nitrogen and previous rhizobial colonization. Functions in the root, upstream of the shoot receptor kinase SUNN and via CLE peptide, to control AON. The polypeptide is Hydroxyproline O-arabinosyltransferase RDN2 (Medicago truncatula (Barrel medic)).